Here is a 151-residue protein sequence, read N- to C-terminus: 6,7-dimethyl-8-ribityllumazine synthase (151 aa).

5-amino-6-(D-ribitylamino)uracil-binding positions include Phe23, 55-57 (AYE), and 79-81 (AVI). Residue 84 to 85 (AT) coordinates (2S)-2-hydroxy-3-oxobutyl phosphate. His87 (proton donor) is an active-site residue. Residue Phe111 participates in 5-amino-6-(D-ribitylamino)uracil binding. Position 125 (Arg125) interacts with (2S)-2-hydroxy-3-oxobutyl phosphate.

Belongs to the DMRL synthase family.

It catalyses the reaction (2S)-2-hydroxy-3-oxobutyl phosphate + 5-amino-6-(D-ribitylamino)uracil = 6,7-dimethyl-8-(1-D-ribityl)lumazine + phosphate + 2 H2O + H(+). The protein operates within cofactor biosynthesis; riboflavin biosynthesis; riboflavin from 2-hydroxy-3-oxobutyl phosphate and 5-amino-6-(D-ribitylamino)uracil: step 1/2. Catalyzes the formation of 6,7-dimethyl-8-ribityllumazine by condensation of 5-amino-6-(D-ribitylamino)uracil with 3,4-dihydroxy-2-butanone 4-phosphate. This is the penultimate step in the biosynthesis of riboflavin. The polypeptide is 6,7-dimethyl-8-ribityllumazine synthase (Leptospira interrogans serogroup Icterohaemorrhagiae serovar copenhageni (strain Fiocruz L1-130)).